Consider the following 346-residue polypeptide: tRNA-specific 2-thiouridylase MnmA (346 aa).

6-13 is a binding site for ATP; that stretch reads AMSGGTDS. Residue Cys-90 is the Nucleophile of the active site. Cys-90 and Cys-187 are disulfide-bonded. Gly-114 is an ATP binding site. The segment at 137 to 139 is interaction with tRNA; sequence KDQ. Catalysis depends on Cys-187, which acts as the Cysteine persulfide intermediate. The interval 292-293 is interaction with tRNA; it reads RY.

Belongs to the MnmA/TRMU family.

It is found in the cytoplasm. It carries out the reaction S-sulfanyl-L-cysteinyl-[protein] + uridine(34) in tRNA + AH2 + ATP = 2-thiouridine(34) in tRNA + L-cysteinyl-[protein] + A + AMP + diphosphate + H(+). Functionally, catalyzes the 2-thiolation of uridine at the wobble position (U34) of tRNA, leading to the formation of s(2)U34. This Nitratidesulfovibrio vulgaris (strain DP4) (Desulfovibrio vulgaris) protein is tRNA-specific 2-thiouridylase MnmA.